The chain runs to 309 residues: DSC E3 ubiquitin ligase complex subunit C (309 aa).

N-linked (GlcNAc...) asparagine glycosylation is present at Asn-61. Disordered regions lie at residues 88 to 110 and 148 to 177; these read LPPS…GKGK and EQAD…FDRL. Helical transmembrane passes span 257–277 and 289–309; these read DDML…AMWL and GLAV…RIMN.

Belongs to the dsc3 family. In terms of assembly, component of the DSC E3 ubiquitin ligase complex composed of dscA, dscB, dscC and dscD.

It is found in the endoplasmic reticulum membrane. It participates in protein modification; protein ubiquitination. In terms of biological role, component of the DSC E3 ubiquitin ligase complex which is required for the srbA transcriptional activator proteolytic cleavage to release the soluble transcription factor from the membrane in low oxygen or sterol conditions. Required for growth during hypoxia and triazole drug susceptibility, as well as for virulence in a murine model of invasive pulmonary aspergillosis (IPA). The sequence is that of DSC E3 ubiquitin ligase complex subunit C from Aspergillus fumigatus (strain CBS 144.89 / FGSC A1163 / CEA10) (Neosartorya fumigata).